The chain runs to 300 residues: tRNA dimethylallyltransferase (300 aa).

9–16 is a binding site for ATP; that stretch reads GPTASGKS. 11-16 provides a ligand contact to substrate; the sequence is TASGKS. An interaction with substrate tRNA region spans residues 34–37; the sequence is DSKQ.

It belongs to the IPP transferase family. In terms of assembly, monomer. The cofactor is Mg(2+).

It carries out the reaction adenosine(37) in tRNA + dimethylallyl diphosphate = N(6)-dimethylallyladenosine(37) in tRNA + diphosphate. Functionally, catalyzes the transfer of a dimethylallyl group onto the adenine at position 37 in tRNAs that read codons beginning with uridine, leading to the formation of N6-(dimethylallyl)adenosine (i(6)A). This chain is tRNA dimethylallyltransferase, found in Ehrlichia ruminantium (strain Welgevonden).